A 123-amino-acid polypeptide reads, in one-letter code: MARGSALLLASLLLAAALSASAGLWSPAKEKRGWTLNSAGYLLGPHAVGNHRSFSDKNGLTSKRELRPEDDMKPGSFDRSIPENNIMRTIIEFLSFLHLKEAGALDRLLDLPAAASSEDIERS.

Positions 1 to 19 (MARGSALLLASLLLAAALS) are cleaved as a signal peptide. A propeptide spanning residues 20–30 (ASAGLWSPAKE) is cleaved from the precursor. Residues 46–80 (HAVGNHRSFSDKNGLTSKRELRPEDDMKPGSFDRS) are disordered. The segment covering 62–73 (SKRELRPEDDMK) has biased composition (basic and acidic residues). Residues Ser116 and Ser117 each carry the phosphoserine modification.

This sequence belongs to the galanin family.

Its subcellular location is the secreted. Its function is as follows. Endocrine hormone of the central and peripheral nervous systems that binds and activates the G protein-coupled receptors GALR1, GALR2, and GALR3. This small neuropeptide may regulate diverse physiologic functions including contraction of smooth muscle of the gastrointestinal and genitourinary tract, growth hormone and insulin release and adrenal secretion. This Homo sapiens (Human) protein is Galanin peptides (GAL).